We begin with the raw amino-acid sequence, 170 residues long: Large ribosomal subunit protein uL5 (170 aa).

Belongs to the universal ribosomal protein uL5 family. Part of the 50S ribosomal subunit; contacts the 5S rRNA and probably tRNA. Forms a bridge to the 30S subunit in the 70S ribosome.

In terms of biological role, this is one of the proteins that bind and probably mediate the attachment of the 5S RNA into the large ribosomal subunit, where it forms part of the central protuberance. In the 70S ribosome it contacts protein S13 of the 30S subunit (bridge B1b), connecting the 2 subunits; this bridge is implicated in subunit movement. May contact the P site tRNA; the 5S rRNA and some of its associated proteins might help stabilize positioning of ribosome-bound tRNAs. This is Large ribosomal subunit protein uL5 from Methanobrevibacter smithii (strain ATCC 35061 / DSM 861 / OCM 144 / PS).